The following is a 424-amino-acid chain: 3-phosphoshikimate 1-carboxyvinyltransferase (424 aa).

3-phosphoshikimate is bound by residues K21, S22, and R26. K21 is a phosphoenolpyruvate binding site. Phosphoenolpyruvate-binding residues include G91 and R119. 3-phosphoshikimate contacts are provided by S164, Q166, D310, and K337. Q166 contributes to the phosphoenolpyruvate binding site. D310 serves as the catalytic Proton acceptor. Phosphoenolpyruvate is bound by residues R341 and R382.

Belongs to the EPSP synthase family. In terms of assembly, monomer.

The protein localises to the cytoplasm. It catalyses the reaction 3-phosphoshikimate + phosphoenolpyruvate = 5-O-(1-carboxyvinyl)-3-phosphoshikimate + phosphate. It functions in the pathway metabolic intermediate biosynthesis; chorismate biosynthesis; chorismate from D-erythrose 4-phosphate and phosphoenolpyruvate: step 6/7. Catalyzes the transfer of the enolpyruvyl moiety of phosphoenolpyruvate (PEP) to the 5-hydroxyl of shikimate-3-phosphate (S3P) to produce enolpyruvyl shikimate-3-phosphate and inorganic phosphate. The sequence is that of 3-phosphoshikimate 1-carboxyvinyltransferase from Campylobacter hominis (strain ATCC BAA-381 / DSM 21671 / CCUG 45161 / LMG 19568 / NCTC 13146 / CH001A).